A 657-amino-acid polypeptide reads, in one-letter code: MTIITIISGMYIYSLLSQDAHHSQYGQNTNLVLKKPIPKPQTAAFNQESTMASTTLLPSTSTQFLDRTFSTSSSSSRPKLQSLSFSSTLRNKKLVVPCYVSSSVNKKSSVSSSLQSPTFKPPSWKKLCNDVTNLIPKTTNQNPKLNPVQRTAAMVLDAVENAMISHERRRHPHPKTADPAVQIAGNFFPVPEKPVVHNLPVTGTVPECIQGVYVRNGANPLHKPVSGHHLFDGDGMVHAVRFDNGSVSYACRFTETNRLVQERECGRPVFPKAIGELHGHLGIAKLMLFNTRGLFGLVDPTGGLGVANAGLVYFNGHLLAMSEDDLPYHVKVTQTGDLETSGRYDFDGQLKSTMIAHPKIDPETRELFALSYDVVSKPYLKYFRFTSDGEKSPDVEIPLDQPTMIHDFAITENFVVIPDQQVVFRLPEMIRGGSPVVYDEKKKSRFGILNKNAKDASSIQWIEVPDCFCFHLWNSWEEPETDEVVVIGSCMTPPDSIFNEHDETLQSVLSEIRLNLKTGESTRRPVISEQVNLEAGMVNRNLLGRKTRYAYLALTEPWPKVSGFAKVDLSTGEIRKYIYGEGKYGGEPLFLPSGDGEEDGGYIMVFVHDEEKVKSELQLINAVNMKLEATVTLPSRVPYGFHGTFISKEDLSKQALC.

Residues His357, His406, His471, and His642 each coordinate Fe cation.

The protein belongs to the carotenoid oxygenase family. Requires Fe(2+) as cofactor. In terms of tissue distribution, expressed in developing siliques, embryo and endosperm.

Its subcellular location is the plastid. The protein localises to the chloroplast stroma. The enzyme catalyses a 9-cis-epoxycarotenoid + O2 = a 12'-apo-carotenal + 2-cis,4-trans-xanthoxin. It carries out the reaction 9-cis-violaxanthin + O2 = (3S,5R,6S)-5,6-epoxy-3-hydroxy-5,6-dihydro-12'-apo-beta-caroten-12'-al + 2-cis,4-trans-xanthoxin. It catalyses the reaction 9'-cis-neoxanthin + O2 = (3S,5R,6R)-3,5-dihydroxy-6,7-didehydro-5,6-dihydro-12'-apo-beta-caroten-12'-al + 2-cis,4-trans-xanthoxin. Functionally, has a 11,12(11',12') 9-cis epoxycarotenoid cleavage activity. Catalyzes the first step of abscisic-acid biosynthesis from carotenoids. Contributes probably to abscisic acid synthesis for the induction of seed dormancy. This chain is 9-cis-epoxycarotenoid dioxygenase NCED9, chloroplastic (NCED9), found in Arabidopsis thaliana (Mouse-ear cress).